Consider the following 472-residue polypeptide: CAAX prenyl protease 1 homolog (472 aa).

Residues 1–8 (MDVGGALD) are Lumenal-facing. Residues 9-29 (LYGCSVNVYNAILIFIWVLFL) traverse the membrane as a helical segment. At 30–75 (WETYINLRQLKVAKRVTESPEEIKCLMNDVDFDKSRRYAIDKMNFD) the chain is on the cytoplasmic side. Residues 76–96 (IVSGFYNILSLSAVLYFQLIA) form a helical membrane-spanning segment. The Lumenal portion of the chain corresponds to 97-124 (WAWHKSQEHMLFVCSYAPRSFGTTEGSE). The chain crosses the membrane as a helical span at residues 125 to 145 (ILFSLLFTVYVALFQFFESLP). Residues 146 to 175 (WSYYRHFVIEERYGFNKQTIGFFIKDRLKS) are Cytoplasmic-facing. Residues 176-196 (LAVGLVIGLPIISMLVWIIKA) form a helical membrane-spanning segment. The Lumenal segment spans residues 197–207 (GGHYFYIYAYG). A helical transmembrane segment spans residues 208–228 (FTFVVSFIIMFIYPEFIAPIF). At 229-340 (DRYEHFPDCE…LGHWKLKHMT (112 aa)) the chain is on the cytoplasmic side. His329 contributes to the Zn(2+) binding site. Glu330 is an active-site residue. Residue His333 coordinates Zn(2+). Residues 341–361 (FNLIIAQINIFFMFFAFGQLI) traverse the membrane as a helical segment. At 362–382 (NVDQLFVDFGFPPSTAPILIR) the chain is on the lumenal side. A helical transmembrane segment spans residues 383-403 (LIVVFQFIFMPYSSVLEFLMT). The Cytoplasmic portion of the chain corresponds to 404–472 (MLSRKFEFQA…AIDAKMGKEK (69 aa)). Glu410 lines the Zn(2+) pocket. Catalysis depends on Asp414, which acts as the Proton donor.

This sequence belongs to the peptidase M48A family. Homodimer; disulfide-linked. Requires Zn(2+) as cofactor.

It localises to the endoplasmic reticulum membrane. The catalysed reaction is Hydrolyzes the peptide bond -P2-(S-farnesyl or geranylgeranyl)C-P1'-P2'-P3'-COOH where P1' and P2' are amino acids with aliphatic side chains and P3' is any C-terminal residue.. Inhibited by ethylenediaminetetraacetic acid (EDTA) but not by serine, aspartic or cysteine protease inhibitors. Inhibited by high concentration of Zn(2+) (&gt; 0.1 mM). Zinc-dependent metalloproteinase. Proteolytically removes the C-terminal three residues of farnesylated proteins. In Taenia solium (Pork tapeworm), this protein is CAAX prenyl protease 1 homolog.